Here is a 418-residue protein sequence, read N- to C-terminus: Imidazolonepropionase (418 aa).

Positions 80 and 82 each coordinate Fe(3+). 2 residues coordinate Zn(2+): H80 and H82. 4-imidazolone-5-propanoate is bound by residues R89, Y152, and H185. Y152 is a binding site for N-formimidoyl-L-glutamate. Fe(3+) is bound at residue H250. Position 250 (H250) interacts with Zn(2+). A 4-imidazolone-5-propanoate-binding site is contributed by Q253. D325 contacts Fe(3+). D325 provides a ligand contact to Zn(2+). N-formimidoyl-L-glutamate is bound by residues N327 and G329. Residue S330 participates in 4-imidazolone-5-propanoate binding.

This sequence belongs to the metallo-dependent hydrolases superfamily. HutI family. The cofactor is Zn(2+). Fe(3+) is required as a cofactor.

The protein resides in the cytoplasm. It carries out the reaction 4-imidazolone-5-propanoate + H2O = N-formimidoyl-L-glutamate. It participates in amino-acid degradation; L-histidine degradation into L-glutamate; N-formimidoyl-L-glutamate from L-histidine: step 3/3. Functionally, catalyzes the hydrolytic cleavage of the carbon-nitrogen bond in imidazolone-5-propanoate to yield N-formimidoyl-L-glutamate. It is the third step in the universal histidine degradation pathway. The chain is Imidazolonepropionase from Solibacter usitatus (strain Ellin6076).